A 469-amino-acid chain; its full sequence is Arginine biosynthesis bifunctional protein ArgJ, mitochondrial (469 aa).

Substrate-binding residues include threonine 199, lysine 228, threonine 239, glutamate 325, asparagine 464, and threonine 469. Threonine 239 functions as the Nucleophile in the catalytic mechanism.

The protein belongs to the ArgJ family. As to quaternary structure, heterodimer of an alpha and a beta chain. In terms of processing, the alpha and beta chains are autoproteolytically processed from a single precursor protein within the mitochondrion.

The protein resides in the mitochondrion matrix. It catalyses the reaction N(2)-acetyl-L-ornithine + L-glutamate = N-acetyl-L-glutamate + L-ornithine. The catalysed reaction is L-glutamate + acetyl-CoA = N-acetyl-L-glutamate + CoA + H(+). The protein operates within amino-acid biosynthesis; L-arginine biosynthesis; L-ornithine and N-acetyl-L-glutamate from L-glutamate and N(2)-acetyl-L-ornithine (cyclic): step 1/1. It participates in amino-acid biosynthesis; L-arginine biosynthesis; N(2)-acetyl-L-ornithine from L-glutamate: step 1/4. Functionally, catalyzes two activities which are involved in the cyclic version of arginine biosynthesis: the synthesis of acetylglutamate from glutamate and acetyl-CoA, and of ornithine by transacetylation between acetylornithine and glutamate. This chain is Arginine biosynthesis bifunctional protein ArgJ, mitochondrial, found in Sordaria macrospora (strain ATCC MYA-333 / DSM 997 / K(L3346) / K-hell).